The sequence spans 861 residues: Leucine--tRNA ligase (861 aa).

Positions 42–52 (PYPSGKLHMGH) match the 'HIGH' region motif. The 'KMSKS' region signature appears at 618 to 622 (KMSKS). K621 provides a ligand contact to ATP.

Belongs to the class-I aminoacyl-tRNA synthetase family.

It is found in the cytoplasm. It carries out the reaction tRNA(Leu) + L-leucine + ATP = L-leucyl-tRNA(Leu) + AMP + diphosphate. The protein is Leucine--tRNA ligase of Buchnera aphidicola subsp. Baizongia pistaciae (strain Bp).